The primary structure comprises 735 residues: MDVEAKCPMGGGKVEGRAVLFEMTNRLWWPNHLDLSVLHQNPPAGNPMGEGFNYAAEFESLDLAAVKQDIFALMTESQDWWPADYGHYGPLFIRMAWHAAGTYRIGDGRGGAGAGTQRFAPLNSWPDNANLDKARLLLWPIKEKYGRKLSWGDLLILAGNCALESMGFKTAGFAGGRVDIWEPENDIFWGPEREWLGDERYSSDRDLAHPLAAVQMGLIYVNPEGPNGKPDPMAAAHDIRETFGRMAMNDEETVALIAGGHTFGKCHGAAEPSQYVGAEPEGAGIERQGLGWDNSFGSGRGVHTITSGLEGAWTKNPIQWDNGYFENLFEYEWELTKSPAGAHQWTPKNPEAASTVPDAHDPHKRHAPMMATTDLAMRADPAYEKISRRFYDNPDQLAHAFAEAWYKLTHRDMGPYARLLGPEVPSEPRIWQDPVPASDHPLIDDADIAELKAQILAAGLSIARLVTTAWASASTFRGTDKRGGANGARIRLVPQKDWAVNEPTELATALAKLEAIQQDFNAGQTGGKQVSLADLIVLGGCAAVEQAAKKAGHDITVPFTPGRTDASPDQTDVESFAPLEPKIDGFRNYVGEKSVYSAEEMLVDRAHLLTLSAPEMTVLVGGLRVLGANYGGSKLGVFTERPETLTNDFFVNLLKTSTSMKWEASPDADVFEASDRATGEKKWAGTRVDLIFGSNSQLRALSEAYATADAQQTFVDAFVAAWTKVMNLDRFDLPR.

Residues 97–220 (WHAAGTYRIG…LAAVQMGLIY (124 aa)) constitute a cross-link (tryptophyl-tyrosyl-methioninium (Trp-Tyr) (with M-246)). H98 serves as the catalytic Proton acceptor. Positions 220 to 246 (YVNPEGPNGKPDPMAAAHDIRETFGRM) form a cross-link, tryptophyl-tyrosyl-methioninium (Tyr-Met) (with W-97). H261 contributes to the heme b binding site. Residues 342 to 362 (AHQWTPKNPEAASTVPDAHDP) form a disordered region.

This sequence belongs to the peroxidase family. Peroxidase/catalase subfamily. Homodimer or homotetramer. The cofactor is heme b. In terms of processing, formation of the three residue Trp-Tyr-Met cross-link is important for the catalase, but not the peroxidase activity of the enzyme.

It catalyses the reaction H2O2 + AH2 = A + 2 H2O. It carries out the reaction 2 H2O2 = O2 + 2 H2O. Its function is as follows. Bifunctional enzyme with both catalase and broad-spectrum peroxidase activity. The chain is Catalase-peroxidase from Gloeobacter violaceus (strain ATCC 29082 / PCC 7421).